A 1323-amino-acid polypeptide reads, in one-letter code: Tetratricopeptide repeat protein 21 homolog (1323 aa).

17 TPR repeats span residues V56–S89, E411–M444, S580–E613, H667–F700, L702–P735, G736–D768, Q770–K802, M804–P835, I845–I878, A892–D925, K927–N959, E961–H993, H995–C1027, A1031–V1064, E1203–S1236, R1238–K1270, and C1272–Y1305.

It belongs to the TTC21 family.

The polypeptide is Tetratricopeptide repeat protein 21 homolog (Caenorhabditis briggsae).